We begin with the raw amino-acid sequence, 715 residues long: Elongation factor G (715 aa).

The tr-type G domain occupies 8–290 (NRYRNIGICA…AVIDFLPAPT (283 aa)). GTP contacts are provided by residues 17-24 (AHVDAGKT), 88-92 (DTPGH), and 142-145 (NKMD).

This sequence belongs to the TRAFAC class translation factor GTPase superfamily. Classic translation factor GTPase family. EF-G/EF-2 subfamily.

The protein localises to the cytoplasm. Functionally, catalyzes the GTP-dependent ribosomal translocation step during translation elongation. During this step, the ribosome changes from the pre-translocational (PRE) to the post-translocational (POST) state as the newly formed A-site-bound peptidyl-tRNA and P-site-bound deacylated tRNA move to the P and E sites, respectively. Catalyzes the coordinated movement of the two tRNA molecules, the mRNA and conformational changes in the ribosome. The polypeptide is Elongation factor G (Ectopseudomonas mendocina (strain ymp) (Pseudomonas mendocina)).